Here is a 246-residue protein sequence, read N- to C-terminus: Proteasome subunit alpha type-6-A (246 aa).

The protein belongs to the peptidase T1A family. In terms of assembly, component of the 20S core complex of the 26S proteasome. The 26S proteasome is composed of a core protease (CP), known as the 20S proteasome, capped at one or both ends by the 19S regulatory particle (RP/PA700). The 20S proteasome core is composed of 28 subunits that are arranged in four stacked rings, resulting in a barrel-shaped structure. The two end rings are each formed by seven alpha subunits, and the two central rings are each formed by seven beta subunits. The catalytic chamber with the active sites is on the inside of the barrel. As to expression, ubiquitous low levels, higher expression in siliques and flowers.

The protein localises to the cytoplasm. Its subcellular location is the nucleus. Its function is as follows. The proteasome is a multicatalytic proteinase complex which is characterized by its ability to cleave peptides with Arg, Phe, Tyr, Leu, and Glu adjacent to the leaving group at neutral or slightly basic pH. The proteasome has an ATP-dependent proteolytic activity. In Arabidopsis thaliana (Mouse-ear cress), this protein is Proteasome subunit alpha type-6-A (PAA1).